Reading from the N-terminus, the 85-residue chain is Platelet factor 4 (85 aa).

2 disulfide bridges follow: C25-C51 and C27-C67. Phosphoserine is present on S41. Residue 76–82 (KKIIKRL) coordinates heparin.

This sequence belongs to the intercrine alpha (chemokine CxC) family. As to quaternary structure, homotetramer. Interacts with TNFAIP6 (via Link domain). Interacts with CCR1. Interacts with CXCR3. Interacts with THBD; this interaction enhances generation of activated protein C.

The protein resides in the secreted. Its function is as follows. Chemokine released during platelet aggregation that plays a role in different biological processes including hematopoiesis, cell proliferation, differentiation, and activation. Acts via different functional receptors including CCR1, CXCR3A or CXCR3B. Upon interaction with CXCR3A receptor, induces activated T-lymphocytes migration mediated via downstream Ras/extracellular signal-regulated kinase (ERK) signaling. Neutralizes the anticoagulant effect of heparin by binding more strongly to heparin than to the chondroitin-4-sulfate chains of the carrier molecule. Plays a role in the inhibition of hematopoiesis and in the maintenance of hematopoietic stem cell (HSC) quiescence. Chemotactic for neutrophils and monocytes via CCR1. Inhibits endothelial cell proliferation. In cooperation with toll-like receptor 8/TLR8, induces chromatin remodeling and activates inflammatory gene expression via the TBK1-IRF5 axis. In addition, induces myofibroblast differentiation and collagen synthesis in different precursor cells, including endothelial cells, by stimulating endothelial-to-mesenchymal transition. Interacts with thrombomodulin/THBD to enhance the activation of protein C and thus potentiates its anticoagulant activity. The chain is Platelet factor 4 (PF4) from Ovis aries (Sheep).